Consider the following 254-residue polypeptide: 3-deoxy-manno-octulosonate cytidylyltransferase (254 aa).

It belongs to the KdsB family.

It is found in the cytoplasm. The catalysed reaction is 3-deoxy-alpha-D-manno-oct-2-ulosonate + CTP = CMP-3-deoxy-beta-D-manno-octulosonate + diphosphate. It functions in the pathway nucleotide-sugar biosynthesis; CMP-3-deoxy-D-manno-octulosonate biosynthesis; CMP-3-deoxy-D-manno-octulosonate from 3-deoxy-D-manno-octulosonate and CTP: step 1/1. Its pathway is bacterial outer membrane biogenesis; lipopolysaccharide biosynthesis. Its function is as follows. Activates KDO (a required 8-carbon sugar) for incorporation into bacterial lipopolysaccharide in Gram-negative bacteria. The chain is 3-deoxy-manno-octulosonate cytidylyltransferase from Chlamydia trachomatis serovar A (strain ATCC VR-571B / DSM 19440 / HAR-13).